Here is a 117-residue protein sequence, read N- to C-terminus: HPVHNQGEFSVCDSVSVWVANKTTATDMRGNVVTVMVDVNLNNNVYKQYFFETKCKNPNPVPSGCRGIDAKHWNSYCTTTDTFVRALTMERNQASWRFIRINTACVCVISRKNDNFG.

3 disulfides stabilise this stretch: Cys12–Cys77, Cys55–Cys105, and Cys65–Cys107. N-linked (GlcNAc...) asparagine glycosylation is present at Asn21.

It belongs to the NGF-beta family. In terms of assembly, homodimer; non-covalently linked. As to expression, expressed by the venom gland.

It localises to the secreted. Functionally, nerve growth factor is important for the development and maintenance of the sympathetic and sensory nervous systems. It stimulates division and differentiation of sympathetic and embryonic sensory neurons as well as basal forebrain cholinergic neurons in the brain. Its relevance in the snake venom is not clear. However, it has been shown to inhibit metalloproteinase-dependent proteolysis of platelet glycoprotein Ib alpha, suggesting a metalloproteinase inhibition to prevent metalloprotease autodigestion and/or protection against prey proteases. Binds a lipid between the two protein chains in the homodimer. The lipid-bound form promotes histamine relase from mouse mast cells, contrary to the lipid-free form. The sequence is that of Venom nerve growth factor from Daboia russelii (Russel's viper).